Reading from the N-terminus, the 827-residue chain is SID1 transmembrane family member 1 (827 aa).

A signal peptide spans 1–19 (MRGCLRLALLCALPWLLLA). The Extracellular segment spans residues 20 to 309 (ASPGHPAKSP…SIKESVYVKS (290 aa)). Residues N57, N67, N83, N136, and N282 are each glycosylated (N-linked (GlcNAc...) asparagine). A helical membrane pass occupies residues 310–330 (SLFSVFIFLSFYLGCLLVGFV). Over 331-442 (HYLRFQRKSI…DRRIVSKKYK (112 aa)) the chain is Cytoplasmic. The segment at 355-408 (ASHPIAASTPEGSNYGTIDESSSSPGRQMSSSDGGPPGQSDTDSSVEESDFDTM) is disordered. The segment covering 364-374 (PEGSNYGTIDE) has biased composition (polar residues). The span at 375 to 397 (SSSSPGRQMSSSDGGPPGQSDTD) shows a compositional bias: low complexity. The segment covering 398-408 (SSVEESDFDTM) has biased composition (acidic residues). The chain crosses the membrane as a helical span at residues 443–463 (IYFWNIITIAVFYALPVIQLV). Residues 464–494 (ITYQTVVNVTGNQDICYYNFLCAHPLGVLSA) lie on the Extracellular side of the membrane. A glycan (N-linked (GlcNAc...) asparagine) is linked at N471. A helical membrane pass occupies residues 495–515 (FNNILSNLGHVLLGFLFLLIV). The Cytoplasmic portion of the chain corresponds to 516-541 (LRRDILHRRALEAKDIFAVEYGIPKH). Residues 542-562 (FGLFYAMGIALMMEGVLSACY) form a helical membrane-spanning segment. Residues 563–572 (HVCPNYSNFQ) are Extracellular-facing. N-linked (GlcNAc...) asparagine glycosylation is present at N567. The chain crosses the membrane as a helical span at residues 573–590 (FDTSFMYMIAGLCMLKLY). Residues 591-600 (QTRHPDINAS) are Cytoplasmic-facing. A helical transmembrane segment spans residues 601 to 621 (AYSAYASFAVVIMVTVLGVVF). Over 622–626 (GKNDV) the chain is Extracellular. A helical transmembrane segment spans residues 627–647 (WFWVIFSAIHVLASLALSTQI). Over 648–683 (YYMGRFKIDLGIFRRAAMVFYTDCIQQCSRPLYMDR) the chain is Cytoplasmic. A helical membrane pass occupies residues 684–704 (MVLLVVGNLVNWSFALFGLIY). Residues 705–710 (RPRDFA) lie on the Extracellular side of the membrane. A helical membrane pass occupies residues 711–731 (SYMLGIFICNLLLYLAFYIIM). Topologically, residues 732 to 741 (KLRSSEKVLP) are cytoplasmic. A helical transmembrane segment spans residues 742–762 (VPLFCIVATAVMWAAALYFFF). Topologically, residues 763–791 (QNLSSWEGTPAESREKNRECILLDFFDDH) are extracellular. The N-linked (GlcNAc...) asparagine glycan is linked to N764. A helical membrane pass occupies residues 792–812 (DIWHFLSATALFFSFLVLLTL). Residues 813 to 827 (DDDLDVVRRDQIPVF) lie on the Cytoplasmic side of the membrane.

This sequence belongs to the SID1 family.

It localises to the membrane. In terms of biological role, in vitro binds long double-stranded RNA (dsRNA) (500 and 700 base pairs), but not dsRNA shorter than 300 bp. Not involved in RNA autophagy, a process in which RNA is directly imported into lysosomes in an ATP-dependent manner, and degraded. This Homo sapiens (Human) protein is SID1 transmembrane family member 1 (SIDT1).